The chain runs to 252 residues: 2-succinyl-6-hydroxy-2,4-cyclohexadiene-1-carboxylate synthase (252 aa).

It belongs to the AB hydrolase superfamily. MenH family. As to quaternary structure, monomer.

The enzyme catalyses 5-enolpyruvoyl-6-hydroxy-2-succinyl-cyclohex-3-ene-1-carboxylate = (1R,6R)-6-hydroxy-2-succinyl-cyclohexa-2,4-diene-1-carboxylate + pyruvate. It participates in quinol/quinone metabolism; 1,4-dihydroxy-2-naphthoate biosynthesis; 1,4-dihydroxy-2-naphthoate from chorismate: step 3/7. Its pathway is quinol/quinone metabolism; menaquinone biosynthesis. Catalyzes a proton abstraction reaction that results in 2,5-elimination of pyruvate from 2-succinyl-5-enolpyruvyl-6-hydroxy-3-cyclohexene-1-carboxylate (SEPHCHC) and the formation of 2-succinyl-6-hydroxy-2,4-cyclohexadiene-1-carboxylate (SHCHC). This chain is 2-succinyl-6-hydroxy-2,4-cyclohexadiene-1-carboxylate synthase, found in Salmonella agona (strain SL483).